A 92-amino-acid chain; its full sequence is UPF0728 protein C10orf53 homolog (92 aa).

Belongs to the UPF0728 family.

In Danio rerio (Zebrafish), this protein is UPF0728 protein C10orf53 homolog.